The following is a 251-amino-acid chain: Aquaporin (251 aa).

Residues 1–11 (MAGETLRKIQS) are Cytoplasmic-facing. The chain crosses the membrane as a helical span at residues 12–32 (LLGEMVASFIFGFAVYSAILG). Residues 33-42 (STIAQQPAAK) lie on the Extracellular side of the membrane. The chain crosses the membrane as a helical span at residues 43–63 (VIIGLTVGFSAIGIIYSFSDV). At 64–86 (TIAHFNPAITLAAILTGKMGILC) the chain is on the cytoplasmic side. An NPA motif is present at residues 69-71 (NPA). Residues 87-107 (GLGYMLAQCVGFILAVCALLV) traverse the membrane as a helical segment. Residues 108-133 (CSPVGYKETLNVIRPAPAPFGADNLN) are Extracellular-facing. The chain crosses the membrane as a helical span at residues 134–154 (VFFTEFFLTAILVHIAFAVAV). Residues 155–179 (NPYRPKVDTDGKFVDPDEKEPVDRR) lie on the Cytoplasmic side of the membrane. Residues 180-200 (ITAPLCIGLTLGFLAFMGLVT) traverse the membrane as a helical segment. Topologically, residues 201–224 (SGGAFNPGLTLAPVIMSNTWQHFW) are extracellular. The short motif at 206–208 (NPG) is the NPG element. Residues 225–245 (LYLGAQYLGGLVGGLLQVFVL) form a helical membrane-spanning segment. Over 246–251 (YKLSSN) the chain is Cytoplasmic.

This sequence belongs to the MIP/aquaporin (TC 1.A.8) family.

The protein localises to the cell membrane. Functionally, water channel required to facilitate the transport of water across membranes. Involved in osmotolerance. This Encephalitozoon hellem (Microsporidian parasite) protein is Aquaporin (AQP).